The primary structure comprises 141 residues: Large ribosomal subunit protein bL17 (141 aa).

Residues 120–141 (TSAKGQDSGPVLTADEDEFEAA) form a disordered region.

It belongs to the bacterial ribosomal protein bL17 family. In terms of assembly, part of the 50S ribosomal subunit. Contacts protein L32.

In Novosphingobium aromaticivorans (strain ATCC 700278 / DSM 12444 / CCUG 56034 / CIP 105152 / NBRC 16084 / F199), this protein is Large ribosomal subunit protein bL17.